Here is a 103-residue protein sequence, read N- to C-terminus: NADH-quinone oxidoreductase subunit K (103 aa).

Helical transmembrane passes span 6–26 (LAHYLVLGAVLFAISIVGIFL), 32–52 (IVLLMAIELMLLAVNLNFVAF), and 63–83 (VFVFFILTVAAAESAIGLAIL).

Belongs to the complex I subunit 4L family. As to quaternary structure, NDH-1 is composed of 14 different subunits. Subunits NuoA, H, J, K, L, M, N constitute the membrane sector of the complex.

Its subcellular location is the cell inner membrane. The catalysed reaction is a quinone + NADH + 5 H(+)(in) = a quinol + NAD(+) + 4 H(+)(out). Its function is as follows. NDH-1 shuttles electrons from NADH, via FMN and iron-sulfur (Fe-S) centers, to quinones in the respiratory chain. The immediate electron acceptor for the enzyme in this species is believed to be ubiquinone. Couples the redox reaction to proton translocation (for every two electrons transferred, four hydrogen ions are translocated across the cytoplasmic membrane), and thus conserves the redox energy in a proton gradient. The protein is NADH-quinone oxidoreductase subunit K of Ralstonia pickettii (strain 12D).